We begin with the raw amino-acid sequence, 401 residues long: MRGRSLTLSRVKLELARRSMSATSVPSMADFLTKKPYSPPSWASHLRPLPSHTFSLAHLPTPIHRWNLPGLPNGTELWIKRDDFTGMELSGNKVRKLEFLMAEAVDQHADTVITIGGIQSNHCRATATASNYLNLNSHLILRTSKLLADEDPGLVGNLLVERLVGANVHLISKEEYSSIGSEALTNALKEKLEKEGKKPYVIPVGGSNSLGTWGYIEAAREIEEQLNYRPDDLKFDDIVVACGSGGTIAGISLGSWLGALKAKVHAFSVCDDPDYFYDFVQGLLDGLHAGVNSRDIVNIHNAKGKGYAMNTSEELEFVKKVASSTGVILDPVYSGKAAYGLINEITKDPKCWEGRKILFIHTGGLLGLYDKVDQMASLMGNWSRMDVSESVPRKDGVGKMF.

Residues 1-37 (MRGRSLTLSRVKLELARRSMSATSVPSMADFLTKKPY) constitute a mitochondrion transit peptide. Arg-2 is modified (N-acetylserine). Lys-93 bears the N6-(pyridoxal phosphate)lysine mark. The active-site Nucleophile is the Ser-120.

It belongs to the ACC deaminase/D-cysteine desulfhydrase family. The cofactor is pyridoxal 5'-phosphate. As to expression, highly expressed in stems and cauline leaves, and at lower levels in roots, rosette leaves and flowers.

It localises to the mitochondrion. The enzyme catalyses D-cysteine + H2O = hydrogen sulfide + pyruvate + NH4(+) + H(+). It carries out the reaction 1-aminocyclopropane-1-carboxylate + H2O = 2-oxobutanoate + NH4(+). In terms of biological role, catalyzes the production of hydrogen sulfide (H2S) from cysteine. Is mainly responsible for the degradation of cysteine to generate H2S, a regulator of stomatal movement and closure. Has high affinity for D-cysteine. Functionally, possesses 1-aminocyclopropane-1-carboxylic acid (ACC) deaminase activity. Acts as a regulator of ACC levels and causes changes in ethylene levels. The sequence is that of Bifunctional D-cysteine desulfhydrase/1-aminocyclopropane-1-carboxylate deaminase, mitochondrial (DCD) from Arabidopsis thaliana (Mouse-ear cress).